Reading from the N-terminus, the 79-residue chain is Protein OPG081 (79 aa).

Over 1 to 8 (MVDAITVL) the chain is Intravirion. The helical transmembrane segment at 9–29 (TAIGITVLMLLMVISGAAMIV) threads the bilayer. The Virion surface segment spans residues 30–47 (KELNPNDIFTMQSLKFNR). The chain crosses the membrane as a helical span at residues 48 to 68 (AVTIFKYIGLFIYIPGTIILY). Residues 69–79 (ATYVKSLLMKS) are Intravirion-facing.

The protein belongs to the orthopoxvirus OPG081 family.

The protein resides in the virion membrane. Envelope protein. The chain is Protein OPG081 (OPG081) from Vaccinia virus (strain Copenhagen) (VACV).